A 171-amino-acid chain; its full sequence is uncharacterized protein (171 aa).

This sequence belongs to the HHV-5 UL128 protein family. In terms of assembly, forms the envelope pentamer complex (PC) composed of gH, gL, UL128, UL130, and UL131A. The pentamer interacts with host NRP2.

It is found in the virion membrane. Plays a role in viral entry into host cells. Forms a pentameric complex at the surface of the viral envelope together with gH, gL, UL130 and UL131. This complex is required for entry in epithelial, endothelial and myeloid host cells. Mechanistically, engages host receptor(s) including neurophilin 2/NRP2 to mediate infection. Additionally, monomeric UL128 may interfere with certain inflammatory cytokines to increase infection and dissemination by blocking monocytes migration. This is an uncharacterized protein from Human cytomegalovirus (strain AD169) (HHV-5).